The primary structure comprises 401 residues: Argininosuccinate synthase (401 aa).

Residues 10-18 (AYSGGVDTS) and alanine 38 each bind ATP. Residue tyrosine 89 coordinates L-citrulline. Residue glycine 119 participates in ATP binding. L-aspartate-binding residues include threonine 121, asparagine 125, and aspartate 126. Position 125 (asparagine 125) interacts with L-citrulline. L-citrulline contacts are provided by arginine 129, serine 177, serine 186, glutamate 262, and tyrosine 274.

The protein belongs to the argininosuccinate synthase family. Type 1 subfamily. As to quaternary structure, homotetramer.

It localises to the cytoplasm. It carries out the reaction L-citrulline + L-aspartate + ATP = 2-(N(omega)-L-arginino)succinate + AMP + diphosphate + H(+). It functions in the pathway amino-acid biosynthesis; L-arginine biosynthesis; L-arginine from L-ornithine and carbamoyl phosphate: step 2/3. The protein is Argininosuccinate synthase of Microcystis aeruginosa (strain NIES-843 / IAM M-2473).